A 765-amino-acid polypeptide reads, in one-letter code: MKNFLPRTLKNIYELYFNNISVHSIVSRNTQLKRSKIIQMTTETFEDIKLEDIPVDDIDFSDLEEQYKVTEEFNFDQYIVVNGAPVIPSAKVPVLKKALTSLFSKAGKVVNMEFPIDEATGKTKGFLFVECGSMNDAKKIIKSFHGKRLDLKHRLFLYTMKDVERYNSDDFDTEFREPDMPTFVPSSSLKSWLMDDKVRDQFVLQDDVKTSVFWNSMFNEEDSLVESRENWSTNYVRFSPKGTYLFSYHQQGVTAWGGPNFDRLRRFYHPDVRNSSVSPNEKYLVTFSTEPIIVEEDNEFSPFTKKNEGHQLCIWDIASGLLMATFPVIKSPYLKWPLVRWSYNDKYCARMVGDSLIVHDATKNFMPLEAKALKPSGIRDFSFAPEGVKLQPFRNGDEPSVLLAYWTPETNNSACTATIAEVPRGRVLKTVNLVQVSNVTLHWQNQAEFLCFNVERHTKSGKTQFSNLQICRLTERDIPVEKVELKDSVFEFGWEPHGNRFVTISVHEVADMNYAIPANTIRFYAPETKEKTAKDVIKRWSLVKEIPKTFANTVSWSPAGRFVVVGALVGPNMRRSDLQFYDMDYPGEKNINDNNDVSASLKDVAHPTYSAATNITWDPSGRYVTAWSSSLKHKVEHGYKIFNIAGNLVKEDIIAGFKNFAWRPRPASILSNAERKKVRKNLREWSAQFEEQDAMEADTAMRDLILHQRELLKQWTEYREKIGQEMEKSMNFKIFDVQPEDASDDFTTIEEIVEEVLEETKEKVE.

The interval 1–136 (MKNFLPRTLK…LFVECGSMND (136 aa)) is sufficient for interaction with HCR1 and TIF32. The segment at 28-261 (RNTQLKRSKI…GVTAWGGPNF (234 aa)) is sufficient for interaction with PIC8. The residue at position 61 (S61) is a Phosphoserine. Y67 carries the post-translational modification Phosphotyrosine. Residues 77–162 (QYIVVNGAPV…HRLFLYTMKD (86 aa)) form the RRM domain. Phosphoserine is present on S671.

This sequence belongs to the eIF-3 subunit B family. As to quaternary structure, component of the eukaryotic translation initiation factor 3 (eIF-3) complex.

It is found in the cytoplasm. Its function is as follows. RNA-binding component of the eukaryotic translation initiation factor 3 (eIF-3) complex, which is involved in protein synthesis of a specialized repertoire of mRNAs and, together with other initiation factors, stimulates binding of mRNA and methionyl-tRNAi to the 40S ribosome. The eIF-3 complex specifically targets and initiates translation of a subset of mRNAs involved in cell proliferation. The polypeptide is Eukaryotic translation initiation factor 3 subunit B (Saccharomyces cerevisiae (strain YJM789) (Baker's yeast)).